A 148-amino-acid chain; its full sequence is MFQGETAITVDDKGRMAVPTAYRDLVTRVSGNRLVLTYNPFEAGCLWLYAEKEWERVRDDVMSKPNTQRVIRTLQQKLVGSSAVLELDANGRLSIPASHRNAVGIEKKAVLLGMGDKFELWSEQAHRALIQQTLSDGDLGDELLDLRL.

SpoVT-AbrB domains lie at 5-53 (ETAI…AEKE) and 82-125 (SAVL…SEQA).

This sequence belongs to the MraZ family. In terms of assembly, forms oligomers.

Its subcellular location is the cytoplasm. The protein localises to the nucleoid. This chain is Transcriptional regulator MraZ, found in Xanthomonas oryzae pv. oryzae (strain MAFF 311018).